The following is a 400-amino-acid chain: Lysophospholipid transporter LplT (400 aa).

12 helical membrane passes run 19-39, 53-73, 91-111, 139-159, 164-184, 195-213, 227-247, 257-277, 281-301, 304-324, 352-372, and 373-393; these read VIVA…ATLA, VLQM…GQIA, AGAA…LVGI, LMEA…GVLA, IAAL…NLFI, SWRL…VVLW, LFWG…PVAL, YLNA…AKLV, TVSR…IFSL, ALLP…FFVV, NSAM…GVPA, and VAIG…LWIW.

Belongs to the major facilitator superfamily. LplT (TC 2.A.1.42) family.

The protein localises to the cell inner membrane. In terms of biological role, catalyzes the facilitated diffusion of 2-acyl-glycero-3-phosphoethanolamine (2-acyl-GPE) into the cell. The protein is Lysophospholipid transporter LplT of Salmonella schwarzengrund (strain CVM19633).